An 83-amino-acid chain; its full sequence is Exodeoxyribonuclease 7 small subunit (83 aa).

Belongs to the XseB family. As to quaternary structure, heterooligomer composed of large and small subunits.

The protein localises to the cytoplasm. It catalyses the reaction Exonucleolytic cleavage in either 5'- to 3'- or 3'- to 5'-direction to yield nucleoside 5'-phosphates.. Its function is as follows. Bidirectionally degrades single-stranded DNA into large acid-insoluble oligonucleotides, which are then degraded further into small acid-soluble oligonucleotides. This is Exodeoxyribonuclease 7 small subunit from Heliobacterium modesticaldum (strain ATCC 51547 / Ice1).